The chain runs to 208 residues: LexA repressor (208 aa).

The H-T-H motif DNA-binding region spans 28-48; sequence RAEIARELGFRSANAAEEHLK. Catalysis depends on for autocatalytic cleavage activity residues Ser-125 and Lys-162.

This sequence belongs to the peptidase S24 family. As to quaternary structure, homodimer.

It catalyses the reaction Hydrolysis of Ala-|-Gly bond in repressor LexA.. Functionally, represses a number of genes involved in the response to DNA damage (SOS response), including recA and lexA. In the presence of single-stranded DNA, RecA interacts with LexA causing an autocatalytic cleavage which disrupts the DNA-binding part of LexA, leading to derepression of the SOS regulon and eventually DNA repair. The polypeptide is LexA repressor (Aliivibrio fischeri (strain MJ11) (Vibrio fischeri)).